Here is a 339-residue protein sequence, read N- to C-terminus: Deoxyguanosinetriphosphate triphosphohydrolase-like protein (339 aa).

The HD domain occupies 75-186; that stretch reads RLTHTLEVAQ…VQISDKIAYI (112 aa).

Belongs to the dGTPase family. Type 2 subfamily.

This chain is Deoxyguanosinetriphosphate triphosphohydrolase-like protein, found in Caldanaerobacter subterraneus subsp. tengcongensis (strain DSM 15242 / JCM 11007 / NBRC 100824 / MB4) (Thermoanaerobacter tengcongensis).